The following is a 953-amino-acid chain: UvrABC system protein A (953 aa).

33-40 (GLSGSGKS) provides a ligand contact to ATP. 2 consecutive ABC transporter domains span residues 320-599 (WGST…EESI) and 619-949 (GHDN…RYLK). Position 652–659 (652–659 (GVSGSGKS)) interacts with ATP. The C4-type zinc-finger motif lies at 752–778 (CEACQGDGLIKIEMHFLPDVYVKCDIC).

Belongs to the ABC transporter superfamily. UvrA family. Forms a heterotetramer with UvrB during the search for lesions.

Its subcellular location is the cytoplasm. In terms of biological role, the UvrABC repair system catalyzes the recognition and processing of DNA lesions. UvrA is an ATPase and a DNA-binding protein. A damage recognition complex composed of 2 UvrA and 2 UvrB subunits scans DNA for abnormalities. When the presence of a lesion has been verified by UvrB, the UvrA molecules dissociate. This is UvrABC system protein A from Rickettsia prowazekii (strain Madrid E).